The sequence spans 222 residues: MATKPKLHYPNGRGRMESVRWVLAAAGVEFDEEFLETKEQLQKLQDGNHLLFQQVPMVEIDGMKLVQTRSILHYIADKHHLFGKDLKERTLIDMYVEGTLDLLELLIMHPFLKPDDQQKEVANMAQKAIIRYFPVFEKVLRGHGQRFLVGNQLSLADIILLQTILALEEKIPNILSAFPHLQEYTVKISNIPTIKKFLEPGSKKKPPPDDIYVRTVYNIFMP.

The residue at position 1 (M1) is an N-acetylmethionine. A GST N-terminal domain is found at 3–83 (TKPKLHYPNG…YIADKHHLFG (81 aa)). Glutathione contacts are provided by residues Y9, 54 to 55 (QV), and 67 to 68 (QT). Residues 85–208 (DLKERTLIDM…EPGSKKKPPP (124 aa)) form the GST C-terminal domain.

It belongs to the GST superfamily. Alpha family. Homodimer.

Its subcellular location is the cytoplasm. It carries out the reaction RX + glutathione = an S-substituted glutathione + a halide anion + H(+). Its function is as follows. Conjugation of reduced glutathione to a wide number of exogenous and endogenous hydrophobic electrophiles. The protein is Glutathione S-transferase A4 (GSTA4) of Bos taurus (Bovine).